We begin with the raw amino-acid sequence, 255 residues long: 5-oxoprolinase subunit A 2 (255 aa).

The protein belongs to the LamB/PxpA family. As to quaternary structure, forms a complex composed of PxpA, PxpB and PxpC.

It catalyses the reaction 5-oxo-L-proline + ATP + 2 H2O = L-glutamate + ADP + phosphate + H(+). In terms of biological role, catalyzes the cleavage of 5-oxoproline to form L-glutamate coupled to the hydrolysis of ATP to ADP and inorganic phosphate. The sequence is that of 5-oxoprolinase subunit A 2 from Agrobacterium fabrum (strain C58 / ATCC 33970) (Agrobacterium tumefaciens (strain C58)).